Here is a 202-residue protein sequence, read N- to C-terminus: LexA repressor (202 aa).

The H-T-H motif DNA-binding region spans 27–47 (RAEIAAELGFRSANAAEEHLR). Active-site for autocatalytic cleavage activity residues include Ser-119 and Lys-156.

This sequence belongs to the peptidase S24 family. Homodimer.

It carries out the reaction Hydrolysis of Ala-|-Gly bond in repressor LexA.. Represses a number of genes involved in the response to DNA damage (SOS response), including recA and lexA. In the presence of single-stranded DNA, RecA interacts with LexA causing an autocatalytic cleavage which disrupts the DNA-binding part of LexA, leading to derepression of the SOS regulon and eventually DNA repair. This chain is LexA repressor, found in Marinobacter nauticus (strain ATCC 700491 / DSM 11845 / VT8) (Marinobacter aquaeolei).